The chain runs to 227 residues: Protein SSO0193 (227 aa).

One can recognise an AMMECR1 domain in the interval 15–209; sequence EIGRLLIEIA…ETKPNGSDII (195 aa).

The sequence is that of Protein SSO0193 from Saccharolobus solfataricus (strain ATCC 35092 / DSM 1617 / JCM 11322 / P2) (Sulfolobus solfataricus).